Reading from the N-terminus, the 126-residue chain is LWamide neuropeptides (126 aa).

Residues 1-2 constitute a propeptide, 1; sequence KR. Positions 1–126 are disordered; sequence KRQQPGLWGR…KSAIPKAKPQ (126 aa). At Trp-8 the chain carries Tryptophan amide. Positions 11 to 15 are cleaved as a propeptide — 2; the sequence is SADPQ. Residues Trp-20 and Trp-29 each carry the tryptophan amide modification. The propeptide at 32 to 36 is 2; sequence SADPQ. Trp-41 and Trp-50 each carry tryptophan amide. The propeptide at 53 to 57 is 2; the sequence is SADPQ. Tryptophan amide is present on residues Trp-62 and Trp-71. Positions 74-78 are cleaved as a propeptide — 2; sequence SADPQ. The residue at position 83 (Trp-83) is a Tryptophan amide. The propeptide at 86 to 93 is 3; sequence SAGSGKRQ. Position 99 is a tryptophan amide (Trp-99). Positions 102–126 are cleaved as a propeptide — 4; it reads SAEPPQYKELEDLKQKSAIPKAKPQ. The span at 107 to 116 shows a compositional bias: basic and acidic residues; it reads QYKELEDLKQ.

This sequence belongs to the LWamide neuropeptide family.

The protein resides in the secreted. In terms of biological role, metamorphosin A may be part of an internal signaling system involved in control of metamorphosis. This is LWamide neuropeptides from Anemonia sulcata (Mediterranean snakelocks sea anemone).